Consider the following 143-residue polypeptide: Nucleoside diphosphate kinase (143 aa).

Residues lysine 11, phenylalanine 59, arginine 87, threonine 93, arginine 104, and asparagine 114 each contribute to the ATP site. The active-site Pros-phosphohistidine intermediate is the histidine 117.

The protein belongs to the NDK family. In terms of assembly, homotetramer. Mg(2+) serves as cofactor.

The protein resides in the cytoplasm. The catalysed reaction is a 2'-deoxyribonucleoside 5'-diphosphate + ATP = a 2'-deoxyribonucleoside 5'-triphosphate + ADP. The enzyme catalyses a ribonucleoside 5'-diphosphate + ATP = a ribonucleoside 5'-triphosphate + ADP. In terms of biological role, major role in the synthesis of nucleoside triphosphates other than ATP. The ATP gamma phosphate is transferred to the NDP beta phosphate via a ping-pong mechanism, using a phosphorylated active-site intermediate. This chain is Nucleoside diphosphate kinase, found in Shewanella sediminis (strain HAW-EB3).